A 1027-amino-acid polypeptide reads, in one-letter code: MSELNIDAEAFKARVELLHGKYREFENEPNSMVFALGSSNPENPYQKTTALHYWLMGYEFPATLIVFTPGKVVIITSGPKAKHLEKVVELFKNNNNGVELEIWQRNNKDVEHSQKLFKDIIELINTAGKTVGIPEKDVYEGKFMKEWKPIWDAAIKEHEFKLVDISAGLSSTWEVKDDKEKAYISIASKCSDRFMNLLSDEMVRAVDDELKITNSKLSDKIENKIDDLKFLKKITNDLSAMCPPNHKFTLDLLDWTYSPIIQSGNKFDLRVSAHSNNDQLHGNGCILASCGIRYNNYCSNTTRTFLIDPSEEMVNNYVFLLDLQKHIIENELKAGRTGKEVYESVVEFIKKVRPELAGNFTKNIGSLIGLEFRDSFFVLNSKNDKRKIQVGDCFNISFGFNALKDMKTNTNYALQLADTVILNEDGPKILTEYTKSKSQVSFYFNNDEVEKEKKPAASTKIPTNLDGNSKILRSKLRGDARGESQDAQKEQIRKENQRKLHEKLQKEGLLRFTAEDATTEGSETRQYFKKYESYVRESQIPNNVRDLRIHVDWRSQTIIVPIYGRPVPFHINSYKNGSKNEEGEYTYLRLNFHSPGSAGGISKNVVELPYDDSPDNQFMRSITLRSKDGDRMSETFKQITDLKKESTKREQERKALADVVQQDKLIENKTGRTKRLDQIFVRPSPDTKRVPSTVFIHENGIRYQSPLRTDSRIDILFSNIKNLIFQSCKGELIVIIHIHLKNPIMMGKKKIQDVQFYREASDVSVDETGTGRRNQNKFRKYGDEDELEQEQEERRKRAMLDKEFKYFADAIAEASNGLVSVESTFRDLGFQGVPNRSAVFCMPTTDCLVQLIEPPFLVVNLEEIEVAILERVQFGLKNFDLVFVYKDFKKPVTHINTIPIESLDFLKQWLTDMDIPYAISTINLKWSTIMQSLQEDPHQFFLDGGWSFLNANSDEEGSDESEEEISEYEASEEEPEDESAYSDEDDYSEDISDGSYSGADSEEEEGEDWDELEKKAAKADRTAGLRD.

Coiled coils occupy residues 8–28 (AEAF…FENE), 82–102 (KHLE…ELEI), 208–233 (DELK…FLKK), 484–507 (SQDA…LQKE), and 637–658 (KQIT…ALAD). 2 disordered regions span residues 767 to 790 (ETGT…LEQE) and 952 to 1027 (NSDE…GLRD). Composition is skewed to acidic residues over residues 953 to 992 (SDEE…EDIS) and 1000 to 1011 (DSEEEEGEDWDE). A compositionally biased stretch (basic and acidic residues) spans 1012-1027 (LEKKAAKADRTAGLRD).

It belongs to the peptidase M24 family. SPT16 subfamily. Forms a stable heterodimer with POB3. The SPT16-POB3 dimer weakly associates with multiple molecules of NHP6 to form the FACT complex.

The protein resides in the nucleus. It is found in the chromosome. In terms of biological role, component of the FACT complex, a general chromatin factor that acts to reorganize nucleosomes. The FACT complex is involved in multiple processes that require DNA as a template such as mRNA elongation, DNA replication and DNA repair. During transcription elongation the FACT complex acts as a histone chaperone that both destabilizes and restores nucleosomal structure. It facilitates the passage of RNA polymerase II and transcription by promoting the dissociation of one histone H2A-H2B dimer from the nucleosome, then subsequently promotes the reestablishment of the nucleosome following the passage of RNA polymerase II. This Candida glabrata (strain ATCC 2001 / BCRC 20586 / JCM 3761 / NBRC 0622 / NRRL Y-65 / CBS 138) (Yeast) protein is FACT complex subunit SPT16 (SPT16).